Reading from the N-terminus, the 122-residue chain is Acidic phospholipase A2 5 (122 aa).

7 cysteine pairs are disulfide-bonded: cysteine 26–cysteine 115, cysteine 28–cysteine 44, cysteine 43–cysteine 95, cysteine 49–cysteine 122, cysteine 50–cysteine 88, cysteine 57–cysteine 81, and cysteine 75–cysteine 86. Phenylalanine 27, glycine 29, and glycine 31 together coordinate Ca(2+). The active site involves histidine 47. Position 48 (aspartate 48) interacts with Ca(2+). Residue aspartate 89 is part of the active site.

This sequence belongs to the phospholipase A2 family. Group II subfamily. D49 sub-subfamily. Monomer (predominant). Non-covalently linked homodimers are also observed. Ca(2+) serves as cofactor. Expressed by the venom gland.

Its subcellular location is the secreted. The catalysed reaction is a 1,2-diacyl-sn-glycero-3-phosphocholine + H2O = a 1-acyl-sn-glycero-3-phosphocholine + a fatty acid + H(+). Preincubation with heparin slightly increase the enzymatic activity. Snake venom phospholipase A2 (PLA2) that inhibits platelet aggregation induced by ADP, arachidonic acid and PAF. Acts in a enzymatic independent manner on a proteinase-activated receptor (PAR1, F2R) to evoke calcium release through the inositol 1,4,5-trisphosphate receptor (ITPR1, IP3R) and induces mouse aorta contraction. PAR1, phospholipase C and IP3R inhibitors suppress PA2-induced aorta contraction. PLA2 catalyzes the calcium-dependent hydrolysis of the 2-acyl groups in 3-sn-phosphoglycerides. The chain is Acidic phospholipase A2 5 from Trimeresurus stejnegeri (Chinese green tree viper).